The chain runs to 167 residues: MTRPTHPNALIWLLLSIAIIALDQATKAWVLTSLPEYIPVPVIHGFWNWYRSYNTGAAFSFLSDAGGWQMWLFIALALGISGLLTFWLSRTPRREWRSALPYALIIGGGIGNVIDRFLHGHVVDFIQWYVGSHYWPSFNLADSAIVAGAIGIGLLSLFDSKHSPKTP.

3 helical membrane-spanning segments follow: residues 10 to 30 (LIWL…KAWV), 68 to 88 (WQMW…TFWL), and 98 to 118 (SALP…DRFL). Catalysis depends on residues Asp-124 and Asp-142. A helical membrane pass occupies residues 138–158 (FNLADSAIVAGAIGIGLLSLF).

This sequence belongs to the peptidase A8 family.

It localises to the cell inner membrane. It catalyses the reaction Release of signal peptides from bacterial membrane prolipoproteins. Hydrolyzes -Xaa-Yaa-Zaa-|-(S,diacylglyceryl)Cys-, in which Xaa is hydrophobic (preferably Leu), and Yaa (Ala or Ser) and Zaa (Gly or Ala) have small, neutral side chains.. Its pathway is protein modification; lipoprotein biosynthesis (signal peptide cleavage). Its function is as follows. This protein specifically catalyzes the removal of signal peptides from prolipoproteins. This is Lipoprotein signal peptidase from Xylella fastidiosa (strain 9a5c).